A 315-amino-acid polypeptide reads, in one-letter code: WD repeat domain-containing protein 83 (315 aa).

WD repeat units follow at residues 23–62 (CQQGAVRAVRFNADGNYLLTCGSDKSLKLWSVSRGTLLKT), 65–104 (GHGYEVLDADGSYDNSQLCSCSSDKTVILWDVASGQVTRK), 107–146 (GHAGKVNCVQFNEEATVMLSGSIDGTVRCWDTRSRRMEPI), 151–188 (ESQDGISSLKVSEHELLTGSVDGRVRRYDLRMGQLQVD), 189–228 (YIGSPITCVCFSRDGQCTLSSSLDSTVRLLDKSTGEMLGE), 233–272 (VNKGYKLDCCLTDKDTHVLSCSEDGHVYYWDLVEGSLTLK), and 275–313 (VGKAVVQSLSFHPTEPRLLTSMEGRVQVWGAEPEDAAEN).

The protein belongs to the WD repeat MORG1 family.

The protein localises to the cytoplasm. Its function is as follows. Molecular scaffold protein for various multimeric protein complexes. Acts as a module in the assembly of a multicomponent scaffold for the ERK pathway, linking ERK responses to specific agonists. Also involved in response to hypoxia by acting as a negative regulator of HIF1A/HIF-1-alpha. This chain is WD repeat domain-containing protein 83 (wdr83), found in Danio rerio (Zebrafish).